Consider the following 194-residue polypeptide: Peptidyl-tRNA hydrolase (194 aa).

Y17 contributes to the tRNA binding site. Residue H22 is the Proton acceptor of the active site. TRNA-binding residues include F68, N70, and N116.

The protein belongs to the PTH family. Monomer.

Its subcellular location is the cytoplasm. It catalyses the reaction an N-acyl-L-alpha-aminoacyl-tRNA + H2O = an N-acyl-L-amino acid + a tRNA + H(+). In terms of biological role, hydrolyzes ribosome-free peptidyl-tRNAs (with 1 or more amino acids incorporated), which drop off the ribosome during protein synthesis, or as a result of ribosome stalling. Functionally, catalyzes the release of premature peptidyl moieties from peptidyl-tRNA molecules trapped in stalled 50S ribosomal subunits, and thus maintains levels of free tRNAs and 50S ribosomes. The protein is Peptidyl-tRNA hydrolase of Glaesserella parasuis serovar 5 (strain SH0165) (Haemophilus parasuis).